The sequence spans 124 residues: Small ribosomal subunit protein uS12 (124 aa).

At Asp89 the chain carries 3-methylthioaspartic acid. Lys108 is subject to N6-acetyllysine.

This sequence belongs to the universal ribosomal protein uS12 family. As to quaternary structure, part of the 30S ribosomal subunit. Contacts proteins S8 and S17. May interact with IF1 in the 30S initiation complex.

Its function is as follows. With S4 and S5 plays an important role in translational accuracy. Interacts with and stabilizes bases of the 16S rRNA that are involved in tRNA selection in the A site and with the mRNA backbone. Located at the interface of the 30S and 50S subunits, it traverses the body of the 30S subunit contacting proteins on the other side and probably holding the rRNA structure together. The combined cluster of proteins S8, S12 and S17 appears to hold together the shoulder and platform of the 30S subunit. In Escherichia coli O139:H28 (strain E24377A / ETEC), this protein is Small ribosomal subunit protein uS12.